We begin with the raw amino-acid sequence, 407 residues long: Large ribosomal subunit protein uL3-like (407 aa).

A compositionally biased stretch (basic residues) spans 1–31 (MSHRKFSAPRHGHLGFLPHKRSHRHRGKVKT). Disordered regions lie at residues 1 to 35 (MSHRKFSAPRHGHLGFLPHKRSHRHRGKVKTWPRD) and 383 to 407 (QEKRAFMGPQKKHLEKEKPETSGDL). The span at 394–407 (KHLEKEKPETSGDL) shows a compositional bias: basic and acidic residues.

The protein belongs to the universal ribosomal protein uL3 family. As to quaternary structure, component of the large ribosomal subunit in striated muscle cells.

In terms of biological role, heart- and skeletal muscle-specific component of the ribosome, which regulates muscle function. Component of the large ribosomal subunit in striated muscle cells: replaces the RPL3 paralog in the ribosome in these cells. The ribosome is a large ribonucleoprotein complex responsible for the synthesis of proteins in the cell. Inhibits myotube growth and muscle function. In Bos taurus (Bovine), this protein is Large ribosomal subunit protein uL3-like (RPL3L).